Reading from the N-terminus, the 188-residue chain is Pyridoxal 5'-phosphate synthase subunit PdxT (188 aa).

46–48 (GES) contributes to the L-glutamine binding site. Cys78 serves as the catalytic Nucleophile. L-glutamine is bound by residues Arg105 and 134 to 135 (IR). Catalysis depends on charge relay system residues His170 and Glu172.

This sequence belongs to the glutaminase PdxT/SNO family. As to quaternary structure, in the presence of PdxS, forms a dodecamer of heterodimers. Only shows activity in the heterodimer.

It carries out the reaction aldehydo-D-ribose 5-phosphate + D-glyceraldehyde 3-phosphate + L-glutamine = pyridoxal 5'-phosphate + L-glutamate + phosphate + 3 H2O + H(+). It catalyses the reaction L-glutamine + H2O = L-glutamate + NH4(+). It participates in cofactor biosynthesis; pyridoxal 5'-phosphate biosynthesis. In terms of biological role, catalyzes the hydrolysis of glutamine to glutamate and ammonia as part of the biosynthesis of pyridoxal 5'-phosphate. The resulting ammonia molecule is channeled to the active site of PdxS. This chain is Pyridoxal 5'-phosphate synthase subunit PdxT, found in Desulforamulus reducens (strain ATCC BAA-1160 / DSM 100696 / MI-1) (Desulfotomaculum reducens).